The chain runs to 182 residues: MKHDEQLLIRSTTVLGVIRDGKAALGSDGQMTLGNTVLKHSTRKTRRLYHGQIIAGFAGATADAVTLLDRFEEKLEAFSGRLERAAVELARDWRTDKYLRRLEAMLAIVTAEKALIISGTGDVIEPEDGIVAIGSGSMYALAAARSLLAHTTLSAREIVHESLKIAADICIYTNDHIVIEEV.

Residue Thr12 is part of the active site. Residues Ala167, Cys170, and Thr173 each contribute to the Na(+) site.

The protein belongs to the peptidase T1B family. HslV subfamily. A double ring-shaped homohexamer of HslV is capped on each side by a ring-shaped HslU homohexamer. The assembly of the HslU/HslV complex is dependent on binding of ATP.

Its subcellular location is the cytoplasm. It catalyses the reaction ATP-dependent cleavage of peptide bonds with broad specificity.. With respect to regulation, allosterically activated by HslU binding. In terms of biological role, protease subunit of a proteasome-like degradation complex believed to be a general protein degrading machinery. In Chlorobium phaeobacteroides (strain DSM 266 / SMG 266 / 2430), this protein is ATP-dependent protease subunit HslV.